A 20-amino-acid polypeptide reads, in one-letter code: Equinatoxin-1 (20 aa).

The interval 3–12 is plays an important role in the hemolytic activity; it reads AVAGAVIEGA. The segment at 11-20 is N-terminal region; the sequence is GASLTFNVLQ.

It belongs to the actinoporin family. Sea anemone subfamily. In terms of assembly, octamer or nonamer in membranes. Monomer in the soluble state.

The protein resides in the secreted. It is found in the nematocyst. The protein localises to the target cell membrane. In terms of biological role, pore-forming protein that forms cations-selective hydrophilic pores of around 1 nm and causes cardiac stimulation and cytolysis. Pore formation is a multi-step process that involves specific recognition of membrane sphingomyelin (but neither cholesterol nor phosphatidylcholine) using aromatic rich region and adjacent phosphocholine (POC) binding site, firm binding to the membrane (mainly driven by hydrophobic interactions) accompanied by the transfer of the N-terminal region to the lipid-water interface and finally pore formation after oligomerization of monomers. Cytolytic effects include red blood cells hemolysis, platelet aggregation and lysis, cytotoxic and cytostatic effects on fibroblasts. Lethality in mammals has been ascribed to severe vasospasm of coronary vessels, cardiac arrhythmia, and inotropic effects. This Actinia equina (Beadlet anemone) protein is Equinatoxin-1.